The primary structure comprises 306 residues: MLNYVIKRLLGLIPTLFIVSVLVFLFVHMLPGDPARLIAGPEADAQVIELVRQQLGLDQPLYHQFWHYISNAVQGDLGLSMVSRRPVADEIASRFMPTLWLTITSMVWAVIFGMAAGIIAAVWRNRWPDRLSMTIAVSGISFPAFALGMLLIQVFSVELGWLPTVGADSWQHYILPSLTLGAAVAAVMARFTRASFVDVLSEDYMRTARAKGVSETWVVLKHGLRNAMIPVVTMMGLQFGFLLGGSIVVEKVFNWPGLGRLLVDSVEMRDYPVIQAEILLFSLEFILINLVVDVLYAAINPAIRYK.

The Cytoplasmic portion of the chain corresponds to 1 to 8; it reads MLNYVIKR. A helical membrane pass occupies residues 9–29; the sequence is LLGLIPTLFIVSVLVFLFVHM. Residues 30–102 lie on the Periplasmic side of the membrane; the sequence is LPGDPARLIA…SRFMPTLWLT (73 aa). An ABC transmembrane type-1 domain is found at 95-292; it reads FMPTLWLTIT…LEFILINLVV (198 aa). The chain crosses the membrane as a helical span at residues 103-123; it reads ITSMVWAVIFGMAAGIIAAVW. Topologically, residues 124–134 are cytoplasmic; sequence RNRWPDRLSMT. A helical membrane pass occupies residues 135–155; that stretch reads IAVSGISFPAFALGMLLIQVF. Residues 156-168 lie on the Periplasmic side of the membrane; it reads SVELGWLPTVGAD. The chain crosses the membrane as a helical span at residues 169-189; that stretch reads SWQHYILPSLTLGAAVAAVMA. The Cytoplasmic segment spans residues 190–228; the sequence is RFTRASFVDVLSEDYMRTARAKGVSETWVVLKHGLRNAM. A helical transmembrane segment spans residues 229 to 249; that stretch reads IPVVTMMGLQFGFLLGGSIVV. The Periplasmic segment spans residues 250–277; it reads EKVFNWPGLGRLLVDSVEMRDYPVIQAE. A helical membrane pass occupies residues 278–298; it reads ILLFSLEFILINLVVDVLYAA. The Cytoplasmic segment spans residues 299–306; that stretch reads INPAIRYK.

It belongs to the binding-protein-dependent transport system permease family. In terms of assembly, the complex is composed of two ATP-binding proteins (GsiA), two transmembrane proteins (GsiC and GsiD) and a solute-binding protein (GsiB).

The protein localises to the cell inner membrane. Functionally, part of the ABC transporter complex GsiABCD involved in glutathione import. Probably responsible for the translocation of the substrate across the membrane. In Escherichia coli O6:H1 (strain CFT073 / ATCC 700928 / UPEC), this protein is Glutathione transport system permease protein GsiC.